Here is a 583-residue protein sequence, read N- to C-terminus: Protein NRT1/ PTR FAMILY 5.1 (583 aa).

A helical transmembrane segment spans residues 74–94 (WSGAVWITPIAGAYIADSYIG). At T98 the chain carries Phosphothreonine. Helical transmembrane passes span 99–119 (FTAS…AVTV), 134–154 (ASSL…IGAG), 182–202 (FFNW…LGLV), 210–230 (WGLG…VFYI), 320–340 (VLGL…WAQV), 361–381 (IPAA…VPMY), 405–425 (LGVG…VEVK), 446–466 (IFWL…NAIG), 485–505 (TFFT…VTMI), and 529–549 (YYYG…VWAA).

Belongs to the major facilitator superfamily. Proton-dependent oligopeptide transporter (POT/PTR) (TC 2.A.17) family. Expressed in flowers. Detected in stems, leaves and siliques.

It localises to the membrane. This Arabidopsis thaliana (Mouse-ear cress) protein is Protein NRT1/ PTR FAMILY 5.1 (NPF5.1).